The following is a 232-amino-acid chain: Dephospho-CoA kinase (232 aa).

A DPCK domain is found at 3–206 (IVGLTGGIAS…RPLTWIEFWR (204 aa)). Position 8 to 15 (8 to 15 (GGIASGKS)) interacts with ATP.

Belongs to the CoaE family.

It is found in the peroxisome. It carries out the reaction 3'-dephospho-CoA + ATP = ADP + CoA + H(+). Its pathway is cofactor biosynthesis; coenzyme A biosynthesis; CoA from (R)-pantothenate: step 5/5. Its function is as follows. Catalyzes the phosphorylation of the 3'-hydroxyl group of dephosphocoenzyme A to form coenzyme A. The sequence is that of Dephospho-CoA kinase from Arabidopsis thaliana (Mouse-ear cress).